Consider the following 451-residue polypeptide: Glycylpeptide N-tetradecanoyltransferase (451 aa).

Residues 177 to 179 and 185 to 189 each bind tetradecanoyl-CoA; these read LCI and NKRLA. L451 functions as the Proton acceptor; via carboxylate in the catalytic mechanism.

Belongs to the NMT family. Monomer.

The protein localises to the cytoplasm. It carries out the reaction N-terminal glycyl-[protein] + tetradecanoyl-CoA = N-tetradecanoylglycyl-[protein] + CoA + H(+). Its activity is regulated as follows. Competitively inhibited by SC-58272, a peptidomimetic derived from the N-terminal sequence of a natural substrate. Functionally, adds a myristoyl group to the N-terminal glycine residue of certain cellular proteins. Substrate specificity requires an N-terminal glycine in the nascent polypeptide substrates. Ser is present at position 5 in almost all known N-myristoyl proteins and Lys is commonly encountered at postion 6. Basic residues are preferred at positions 7 and 8. The sequence is that of Glycylpeptide N-tetradecanoyltransferase (NMT1) from Candida albicans (strain SC5314 / ATCC MYA-2876) (Yeast).